Here is a 174-residue protein sequence, read N- to C-terminus: Nucleoside-triphosphatase THEP1 (174 aa).

ATP contacts are provided by residues 7–14 and 94–101; these read GRPGVGKT and LIIIDEIG.

Belongs to the THEP1 NTPase family.

It carries out the reaction a ribonucleoside 5'-triphosphate + H2O = a ribonucleoside 5'-diphosphate + phosphate + H(+). Has nucleotide phosphatase activity towards ATP, GTP, CTP, TTP and UTP. May hydrolyze nucleoside diphosphates with lower efficiency. The sequence is that of Nucleoside-triphosphatase THEP1 from Thermotoga sp. (strain RQ2).